The following is a 279-amino-acid chain: Energy-coupling factor transporter ATP-binding protein EcfA1 (279 aa).

Residues 6–240 form the ABC transporter domain; sequence VRLEHVFYKY…ADAMREIGLG (235 aa). Residue 40–47 coordinates ATP; that stretch reads GHNGSGKS.

It belongs to the ABC transporter superfamily. Energy-coupling factor EcfA family. In terms of assembly, forms a stable energy-coupling factor (ECF) transporter complex composed of 2 membrane-embedded substrate-binding proteins (S component), 2 ATP-binding proteins (A component) and 2 transmembrane proteins (T component).

The protein localises to the cell membrane. In terms of biological role, ATP-binding (A) component of a common energy-coupling factor (ECF) ABC-transporter complex. Unlike classic ABC transporters this ECF transporter provides the energy necessary to transport a number of different substrates. In Listeria monocytogenes serovar 1/2a (strain ATCC BAA-679 / EGD-e), this protein is Energy-coupling factor transporter ATP-binding protein EcfA1.